We begin with the raw amino-acid sequence, 400 residues long: Mu-type opioid receptor (400 aa).

The Extracellular segment spans residues 1–68; sequence MDSSAVPANA…CPPTGSPSMI (68 aa). Residues Asn9, Asn12, Asn33, Asn40, and Asn48 are each glycosylated (N-linked (GlcNAc...) asparagine). The helical transmembrane segment at 69 to 93 threads the bilayer; the sequence is TAITIMALYSIVCVVGLFGNFLVMY. Residues 94–106 are Cytoplasmic-facing; that stretch reads VIVRYTKMKTATN. A helical transmembrane segment spans residues 107–131; the sequence is IYIFNLALADALATSTLPFQSVNYL. Over 132–142 the chain is Extracellular; it reads MGTWPFGTILC. Cysteines 142 and 219 form a disulfide. Residues 143–165 form a helical membrane-spanning segment; that stretch reads KIVISIDYYNMFTSIFTLCTMSV. Residues 166-185 lie on the Cytoplasmic side of the membrane; it reads DRYIAVCHPVKALDFRTPRN. Tyr168 bears the Phosphotyrosine mark. The helical transmembrane segment at 186 to 207 threads the bilayer; sequence AKIVNVCNWIISSAIGLPVMFM. Residues 208 to 230 are Extracellular-facing; the sequence is ATTKYRQGSIDCTLTFSHPTWYW. A helical membrane pass occupies residues 231 to 255; it reads ENLLKICVFIFAFIMPVLIITVCYG. At 256 to 279 the chain is on the cytoplasmic side; that stretch reads LMILRLKSVRMLSGSKEKDRNLRR. Residues 280–306 traverse the membrane as a helical segment; it reads ITRMVLVVVAVFIVCWTPIHIYVIIKA. The Extracellular portion of the chain corresponds to 307–314; the sequence is LVTIPETT. Residues 315–338 traverse the membrane as a helical segment; it reads FQTVSWHFCIALGYTNSCLNPVLY. Positions 334–338 match the NPxxY; plays a role in stabilizing the activated conformation of the receptor motif; the sequence is NPVLY. Residues 339 to 400 lie on the Cytoplasmic side of the membrane; the sequence is AFLDENFKRC…NLEAETAPLP (62 aa). Residue Cys353 is the site of S-palmitoyl cysteine attachment. At Ser365 the chain carries Phosphoserine. Thr372 is modified (phosphothreonine). At Ser377 the chain carries Phosphoserine. Thr396 carries the post-translational modification Phosphothreonine.

This sequence belongs to the G-protein coupled receptor 1 family. In terms of assembly, forms homooligomers and heterooligomers with other GPCRs, such as OPRD1, OPRK1, OPRL1, NPFFR2, ADRA2A, SSTR2, CNR1 and CCR5 (probably in dimeric forms). Interacts with heterotrimeric G proteins; interaction with a heterotrimeric complex containing GNAI1, GNB1 and GNG2 stabilizes the active conformation of the receptor and increases its affinity for endomorphin-2, the synthetic opioid peptide DAMGO and for morphinan agonists. Interacts with PPL; the interaction disrupts agonist-mediated G-protein activation. Interacts (via C-terminus) with DNAJB4 (via C-terminus). Interacts with calmodulin; the interaction inhibits the constitutive activity of OPRM1; it abolishes basal and attenuates agonist-stimulated G-protein coupling. Interacts with FLNA, PLD2, RANBP9 and WLS and GPM6A. Interacts with RTP4. Interacts with SYP and GNAS. Interacts with RGS9, RGS17, RGS20, RGS4, PPP1R9B and HINT1. Post-translationally, phosphorylated. Differentially phosphorylated in basal and agonist-induced conditions. Agonist-mediated phosphorylation modulates receptor internalization. Phosphorylated by GRK2 in a agonist-dependent manner. Phosphorylation at Tyr-168 requires receptor activation, is dependent on non-receptor protein tyrosine kinase Src and results in a decrease in agonist efficacy by reducing G-protein coupling efficiency. Phosphorylated on tyrosine residues; the phosphorylation is involved in agonist-induced G-protein-independent receptor down-regulation. Phosphorylation at Ser-377 is involved in G-protein-dependent but not beta-arrestin-dependent activation of the ERK pathway. In terms of processing, ubiquitinated. A basal ubiquitination seems not to be related to degradation. Ubiquitination is increased upon formation of OPRM1:OPRD1 oligomers leading to proteasomal degradation; the ubiquitination is diminished by RTP4.

It is found in the cell membrane. Its subcellular location is the cell projection. The protein resides in the axon. The protein localises to the perikaryon. It localises to the dendrite. It is found in the endosome. Receptor for endogenous opioids such as beta-endorphin and endomorphin. Receptor for natural and synthetic opioids including morphine, heroin, DAMGO, fentanyl, etorphine, buprenorphin and methadone. Also activated by enkephalin peptides, such as Met-enkephalin or Met-enkephalin-Arg-Phe, with higher affinity for Met-enkephalin-Arg-Phe. Agonist binding to the receptor induces coupling to an inactive GDP-bound heterotrimeric G-protein complex and subsequent exchange of GDP for GTP in the G-protein alpha subunit leading to dissociation of the G-protein complex with the free GTP-bound G-protein alpha and the G-protein beta-gamma dimer activating downstream cellular effectors. The agonist- and cell type-specific activity is predominantly coupled to pertussis toxin-sensitive G(i) and G(o) G alpha proteins, GNAI1, GNAI2, GNAI3 and GNAO1, and to a lesser extent to pertussis toxin-insensitive G alpha proteins GNAZ and GNA15. They mediate an array of downstream cellular responses, including inhibition of adenylate cyclase activity and both N-type and L-type calcium channels, activation of inward rectifying potassium channels, mitogen-activated protein kinase (MAPK), phospholipase C (PLC), phosphoinositide/protein kinase (PKC), phosphoinositide 3-kinase (PI3K) and regulation of NF-kappa-B. Also couples to adenylate cyclase stimulatory G alpha proteins. The selective temporal coupling to G-proteins and subsequent signaling can be regulated by RGSZ proteins, such as RGS9, RGS17 and RGS4. Phosphorylation by members of the GPRK subfamily of Ser/Thr protein kinases and association with beta-arrestins is involved in short-term receptor desensitization. Beta-arrestins associate with the GPRK-phosphorylated receptor and uncouple it from the G-protein thus terminating signal transduction. The phosphorylated receptor is internalized through endocytosis via clathrin-coated pits which involves beta-arrestins. The activation of the ERK pathway occurs either in a G-protein-dependent or a beta-arrestin-dependent manner and is regulated by agonist-specific receptor phosphorylation. Acts as a class A G-protein coupled receptor (GPCR) which dissociates from beta-arrestin at or near the plasma membrane and undergoes rapid recycling. Receptor down-regulation pathways are varying with the agonist and occur dependent or independent of G-protein coupling. Endogenous ligands induce rapid desensitization, endocytosis and recycling. Heterooligomerization with other GPCRs can modulate agonist binding, signaling and trafficking properties. Involved in neurogenesis. This Saimiri boliviensis boliviensis (Bolivian squirrel monkey) protein is Mu-type opioid receptor (OPRM1).